Reading from the N-terminus, the 338-residue chain is Ketol-acid reductoisomerase (NADP(+)) (338 aa).

Positions 1–181 constitute a KARI N-terminal Rossmann domain; sequence MKVFYDKDCD…GGGRTGIIET (181 aa). NADP(+) contacts are provided by residues 24-27, R47, S50, T52, and 82-85; these read YGSQ and DEFQ. H107 is a catalytic residue. Residue G133 coordinates NADP(+). The KARI C-terminal knotted domain occupies 182–327; the sequence is TFKDETETDL…EQLRSMMPWI (146 aa). Positions 190, 194, 226, and 230 each coordinate Mg(2+). Residue S251 participates in substrate binding.

The protein belongs to the ketol-acid reductoisomerase family. The cofactor is Mg(2+).

It carries out the reaction (2R)-2,3-dihydroxy-3-methylbutanoate + NADP(+) = (2S)-2-acetolactate + NADPH + H(+). The enzyme catalyses (2R,3R)-2,3-dihydroxy-3-methylpentanoate + NADP(+) = (S)-2-ethyl-2-hydroxy-3-oxobutanoate + NADPH + H(+). The protein operates within amino-acid biosynthesis; L-isoleucine biosynthesis; L-isoleucine from 2-oxobutanoate: step 2/4. It participates in amino-acid biosynthesis; L-valine biosynthesis; L-valine from pyruvate: step 2/4. Involved in the biosynthesis of branched-chain amino acids (BCAA). Catalyzes an alkyl-migration followed by a ketol-acid reduction of (S)-2-acetolactate (S2AL) to yield (R)-2,3-dihydroxy-isovalerate. In the isomerase reaction, S2AL is rearranged via a Mg-dependent methyl migration to produce 3-hydroxy-3-methyl-2-ketobutyrate (HMKB). In the reductase reaction, this 2-ketoacid undergoes a metal-dependent reduction by NADPH to yield (R)-2,3-dihydroxy-isovalerate. The protein is Ketol-acid reductoisomerase (NADP(+)) of Pseudomonas entomophila (strain L48).